Consider the following 481-residue polypeptide: GDP-fucose protein O-fucosyltransferase 3 (481 aa).

Residues 1 to 8 (MVRFQRRK) are Cytoplasmic-facing. Residues 9–31 (LLASCLCVTATVFLMVTLQVVVE) form a helical; Signal-anchor for type II membrane protein membrane-spanning segment. Residues 32–481 (LGKFERKKLK…EEFWALVFKD (450 aa)) lie on the Lumenal side of the membrane. Asparagine 110, asparagine 168, and asparagine 318 each carry an N-linked (GlcNAc...) asparagine glycan. A disulfide bond links cysteine 389 and cysteine 392. A glycan (N-linked (GlcNAc...) asparagine) is linked at asparagine 468.

Belongs to the glycosyltransferase 10 family. In terms of tissue distribution, widely expressed, with a higher expression in liver and thymus.

It localises to the endoplasmic reticulum membrane. It catalyses the reaction L-threonyl-[protein] + GDP-beta-L-fucose = 3-O-(alpha-L-fucosyl)-L-threonyl-[protein] + GDP + H(+). The enzyme catalyses L-seryl-[protein] + GDP-beta-L-fucose = 3-O-(alpha-L-fucosyl)-L-seryl-[protein] + GDP + H(+). It participates in protein modification; protein glycosylation. In terms of biological role, protein O-fucosyltransferase that specifically catalyzes O-fucosylation of serine or threonine residues in EMI domains of target proteins, such as MMRN1, MMRN2 and EMID1. Attaches fucose through an O-glycosidic linkage. O-fucosylation of EMI domain-containing proteins may be required for facilitating protein folding and secretion. May also show alpha-(1,3)-fucosyltransferase activity toward the innermost N-acetyl glucosamine (GlcNAc) residue in biantennary N-glycan acceptors. However, this was tested with a library of synthetic substrates and this activity is unsure in vivo. May be involved in biosynthesis of Lewis X-carrying biantennary N-glycans that regulate neuron stem cell self-renewal during brain development. In Mus musculus (Mouse), this protein is GDP-fucose protein O-fucosyltransferase 3.